Reading from the N-terminus, the 378-residue chain is Chaperone protein DnaJ (378 aa).

The 65-residue stretch at 3–67 folds into the J domain; the sequence is DYYDLLGVSK…QTRGRYDQFG (65 aa). The segment at 133 to 215 adopts a CR-type zinc-finger fold; the sequence is GQEREIKIPH…CAGQGVRQVR (83 aa). Positions 146, 149, 163, 166, 189, 192, 203, and 206 each coordinate Zn(2+). CXXCXGXG motif repeat units follow at residues 146–153, 163–170, 189–196, and 203–210; these read CDTCNGTG, CSTCGGVG, CPSCEGTG, and CPACAGQG.

The protein belongs to the DnaJ family. Homodimer. Zn(2+) is required as a cofactor.

It localises to the cytoplasm. In terms of biological role, participates actively in the response to hyperosmotic and heat shock by preventing the aggregation of stress-denatured proteins and by disaggregating proteins, also in an autonomous, DnaK-independent fashion. Unfolded proteins bind initially to DnaJ; upon interaction with the DnaJ-bound protein, DnaK hydrolyzes its bound ATP, resulting in the formation of a stable complex. GrpE releases ADP from DnaK; ATP binding to DnaK triggers the release of the substrate protein, thus completing the reaction cycle. Several rounds of ATP-dependent interactions between DnaJ, DnaK and GrpE are required for fully efficient folding. Also involved, together with DnaK and GrpE, in the DNA replication of plasmids through activation of initiation proteins. This is Chaperone protein DnaJ from Prochlorococcus marinus (strain MIT 9313).